The primary structure comprises 563 residues: Arginine--tRNA ligase (563 aa).

The 'HIGH' region motif lies at 121 to 131; it reads PNIAKPFSIGH.

This sequence belongs to the class-I aminoacyl-tRNA synthetase family. In terms of assembly, monomer.

It is found in the cytoplasm. The enzyme catalyses tRNA(Arg) + L-arginine + ATP = L-arginyl-tRNA(Arg) + AMP + diphosphate. The sequence is that of Arginine--tRNA ligase from Streptococcus pyogenes serotype M1.